The following is a 735-amino-acid chain: FHF complex subunit HOOK-interacting protein 2B (735 aa).

The tract at residues 183–229 is disordered; that stretch reads SSSTSDEAAEKDCSGSSSPERASSPSSSSSACSLLSRSGAHPVSSPQ. A compositionally biased stretch (low complexity) spans 196–221; the sequence is SGSSSPERASSPSSSSSACSLLSRSG.

It belongs to the FHIP family.

In Danio rerio (Zebrafish), this protein is FHF complex subunit HOOK-interacting protein 2B (fhip2b).